The following is a 281-amino-acid chain: Tetraspanin-33 (281 aa).

The Cytoplasmic segment spans residues 1–23; it reads MGNAKRATQNDEDYTFVSPVVKY. The chain crosses the membrane as a helical span at residues 24–44; it reads LLFFFNMIFWIISLVLISIGV. At 45–62 the chain is on the extracellular side; sequence YSRIVKHETALACLTVDP. The chain crosses the membrane as a helical span at residues 63–83; the sequence is ALILMVVGILMFFITFCGCVG. At 84–94 the chain is on the cytoplasmic side; sequence SLRENICLLQT. A helical membrane pass occupies residues 95-115; the sequence is FCIFLTIMFLLQLLAGVLGFV. Residues 116-233 lie on the Extracellular side of the membrane; the sequence is FSDKARGKVT…DILVNWIHSN (118 aa). Cystine bridges form between Cys154/Cys222, Cys155/Cys187, Cys171/Cys181, and Cys188/Cys201. The N-linked (GlcNAc...) asparagine glycan is linked to Asn170. A helical transmembrane segment spans residues 234–254; it reads LFLLGGIALGLTIPQLVGILL. Residues 255-281 are Cytoplasmic-facing; sequence SQVLINQIQDQIKLQNYNQQHRSDPWS.

The protein belongs to the tetraspanin (TM4SF) family. As to quaternary structure, homodimer; disulfide-linked.

The protein resides in the cell membrane. Its subcellular location is the cell junction. It is found in the adherens junction. The protein localises to the cytoplasm. Its function is as follows. Part of TspanC8 subgroup, composed of 6 members that interact with the transmembrane metalloprotease ADAM10. This interaction is required for ADAM10 exit from the endoplasmic reticulum and for enzymatic maturation and trafficking to the cell surface as well as substrate specificity. Different TspanC8/ADAM10 complexes have distinct substrates. The polypeptide is Tetraspanin-33 (tspan33) (Danio rerio (Zebrafish)).